Here is a 95-residue protein sequence, read N- to C-terminus: Opiscorpine-4 (95 aa).

Positions 1–19 (MNNKLTALIFLGLLAIASC) are cleaved as a signal peptide. The 41-residue stretch at 55–95 (EFMCVANIDMTKSCDTHCQKASGEKGYCHGTKCKCGVPLSY) folds into the BetaSPN-type CS-alpha/beta domain. 3 disulfide bridges follow: Cys-58–Cys-82, Cys-68–Cys-87, and Cys-72–Cys-89.

Belongs to the long chain scorpion toxin family. Class 3 subfamily. Expressed by the venom gland.

It localises to the secreted. Functionally, has antimicrobial activity against yeasts and bacteria. The sequence is that of Opiscorpine-4 from Opistophthalmus carinatus (African yellow leg scorpion).